The chain runs to 354 residues: GTPase Obg (354 aa).

The region spanning 1–159 (MKFVDEVKIH…RDLVLELKLL (159 aa)) is the Obg domain. The OBG-type G domain occupies 160-333 (ADVGIVGYPN…LLDAVGRALF (174 aa)). GTP-binding positions include 166-173 (GYPNAGKS), 191-195 (FTTLT), 212-215 (DIPG), 283-286 (TKID), and 314-316 (SAV). Residues serine 173 and threonine 193 each coordinate Mg(2+).

The protein belongs to the TRAFAC class OBG-HflX-like GTPase superfamily. OBG GTPase family. In terms of assembly, monomer. The cofactor is Mg(2+).

The protein resides in the cytoplasm. In terms of biological role, an essential GTPase which binds GTP, GDP and possibly (p)ppGpp with moderate affinity, with high nucleotide exchange rates and a fairly low GTP hydrolysis rate. Plays a role in control of the cell cycle, stress response, ribosome biogenesis and in those bacteria that undergo differentiation, in morphogenesis control. The polypeptide is GTPase Obg (Anaeromyxobacter dehalogenans (strain 2CP-1 / ATCC BAA-258)).